The sequence spans 178 residues: MNPFHELEPGPEVPEVVYALIEIPKGSRNKYELDKKTGLLKLDRVLYSPFFYPVDYGIIPQTWYDDGDPFDIMVIMREPVYPLTIVEARPIGIMKMEDSGDKDWKVLAVPVEDPYFKDWKDIDDVPKAFLDEIAHFFQRYKELQGKTTTVEGWGNAEEAKKEILRAIELYKEKFGKKE.

3 residues coordinate substrate: Lys-30, Arg-44, and Tyr-56. 3 residues coordinate Mg(2+): Asp-66, Asp-71, and Asp-103. Substrate is bound at residue Tyr-140.

This sequence belongs to the PPase family. As to quaternary structure, homohexamer. Mg(2+) serves as cofactor.

It localises to the cytoplasm. It carries out the reaction diphosphate + H2O = 2 phosphate + H(+). Its function is as follows. Catalyzes the hydrolysis of inorganic pyrophosphate (PPi) forming two phosphate ions. This is Inorganic pyrophosphatase from Thermococcus kodakarensis (strain ATCC BAA-918 / JCM 12380 / KOD1) (Pyrococcus kodakaraensis (strain KOD1)).